The primary structure comprises 397 residues: Probable N-succinyldiaminopimelate aminotransferase DapC (397 aa).

Pyridoxal 5'-phosphate is bound by residues 109 to 110 and 218 to 222; these read GS and DGMAE. The residue at position 232 (Lys-232) is an N6-(pyridoxal phosphate)lysine.

Belongs to the class-III pyridoxal-phosphate-dependent aminotransferase family. In terms of assembly, homodimer. The cofactor is pyridoxal 5'-phosphate.

Its subcellular location is the cytoplasm. The catalysed reaction is N-succinyl-(2S,6S)-2,6-diaminopimelate + 2-oxoglutarate = (S)-2-succinylamino-6-oxoheptanedioate + L-glutamate. It participates in amino-acid biosynthesis; L-lysine biosynthesis via DAP pathway; LL-2,6-diaminopimelate from (S)-tetrahydrodipicolinate (succinylase route): step 2/3. In terms of biological role, involved in the lysine biosynthetic pathways. It catalyzes the transfer of an amino group from L-glutamate to N-succinyl-2-l-amino-6-oxoheptanedioate (N-succinyl-2-l-amino-6-ketopimelate) in a PLP-dependent reaction, yielding as products N-succinyl-l-2,6-diaminoheptanedioate (N-succinyl-diaminopimelate) and 2-oxoglutarate. The polypeptide is Probable N-succinyldiaminopimelate aminotransferase DapC (dapC) (Mycobacterium tuberculosis (strain CDC 1551 / Oshkosh)).